Here is a 553-residue protein sequence, read N- to C-terminus: LIM domain-containing protein B (553 aa).

The disordered stretch occupies residues leucine 43–asparagine 115. Positions glycine 99–asparagine 114 are enriched in low complexity. 5 consecutive LIM zinc-binding domains span residues proline 205–serine 262, proline 263–arginine 322, glutamate 328–leucine 387, asparagine 388–arginine 447, and glutamine 448–glutamate 505. Positions glutamate 534–lysine 553 are disordered.

The protein localises to the cytoplasm. The protein resides in the cell cortex. It localises to the cytoskeleton. In terms of biological role, regulates and controls rearrangements of the actin cytoskeleton. Required for tip formation, morphogenesis, cell adhesion and motility, chemotaxis and aggregates formation. May function downstream of paxB. The protein is LIM domain-containing protein B (limB) of Dictyostelium discoideum (Social amoeba).